The chain runs to 401 residues: Odorant receptor 88a (401 aa).

Residues M1 to Q26 lie on the Cytoplasmic side of the membrane. Residues M27–V47 form a helical membrane-spanning segment. At P48 to S52 the chain is on the extracellular side. Residues A53 to L73 form a helical membrane-spanning segment. Topologically, residues G74 to R142 are cytoplasmic. A helical membrane pass occupies residues I143–T163. The Extracellular portion of the chain corresponds to H164 to N191. A helical transmembrane segment spans residues F192–V212. The Cytoplasmic segment spans residues T213–K277. The helical transmembrane segment at V278 to L298 threads the bilayer. Topologically, residues S299–D303 are extracellular. A helical transmembrane segment spans residues V304–I324. Residues C325–Q370 are Cytoplasmic-facing. The chain crosses the membrane as a helical span at residues L371 to A391. The Extracellular segment spans residues Y392–H401.

The protein belongs to the insect chemoreceptor superfamily. Heteromeric odorant receptor channel (TC 1.A.69) family. Or49a subfamily. Interacts with Orco. Complexes exist early in the endomembrane system in olfactory sensory neurons (OSNs), coupling these complexes to the conserved ciliary trafficking pathway. Expressed in olfactory sensory neurons in the antenna.

The protein resides in the cell membrane. Its function is as follows. Odorant receptor which mediates acceptance or avoidance behavior, depending on its substrates. The odorant receptor repertoire encodes a large collection of odor stimuli that vary widely in identity, intensity, and duration. May form a complex with Orco to form odorant-sensing units, providing sensitive and prolonged odorant signaling and calcium permeability. This Drosophila melanogaster (Fruit fly) protein is Odorant receptor 88a (Or88a).